The primary structure comprises 476 residues: Probable serine carboxypeptidase CPVL (476 aa).

Residues 1–22 (MVGAMWKVIVSLVLLMPGPCDG) form the signal peptide. Residues Asn81 and Asn132 are each glycosylated (N-linked (GlcNAc...) asparagine). Residue Ser204 is part of the active site. N-linked (GlcNAc...) asparagine glycosylation is found at Asn307 and Asn346. Catalysis depends on residues Asp388 and His448.

Belongs to the peptidase S10 family. In terms of tissue distribution, expressed in macrophages but not in other leukocytes. Abundantly expressed in heart and kidney. Also expressed in spleen, leukocytes, and placenta.

Functionally, may be involved in the digestion of phagocytosed particles in the lysosome, participation in an inflammatory protease cascade, and trimming of peptides for antigen presentation. This is Probable serine carboxypeptidase CPVL (CPVL) from Homo sapiens (Human).